The primary structure comprises 186 residues: CASP-like protein 4C2 (186 aa).

The Cytoplasmic segment spans residues 1–31; that stretch reads MRSPQPHRSGGDTQQHFQSTVSVQKLKRFNS. Residues 32 to 52 traverse the membrane as a helical segment; sequence LILVFRFAAFCFSLASAVFML. The Extracellular segment spans residues 53–71; sequence TNSRGSDSLHWYNFDAFRY. A helical membrane pass occupies residues 72 to 92; sequence VFAANAIVAIYSLFEMAASVW. Residues 93–103 are Cytoplasmic-facing; the sequence is EISRNATLFPE. Residues 104-124 traverse the membrane as a helical segment; that stretch reads ICQVWFDFGHDQVFAYLLLSA. Residues 125–150 are Extracellular-facing; the sequence is NTAGTELARTLKDTCTDNKAFCVQSD. Residues 151 to 171 form a helical membrane-spanning segment; the sequence is IAIVLGFAGFLFLGISSLFSG. The Cytoplasmic portion of the chain corresponds to 172–186; that stretch reads FRVVCFIINGSRFYV.

Belongs to the Casparian strip membrane proteins (CASP) family. As to quaternary structure, homodimer and heterodimers.

It is found in the cell membrane. This Populus trichocarpa (Western balsam poplar) protein is CASP-like protein 4C2.